The following is a 161-amino-acid chain: Cyclic pyranopterin monophosphate synthase (161 aa).

Residues 75-77 (LCH) and 113-114 (ME) contribute to the substrate site. The active site involves D128.

The protein belongs to the MoaC family. In terms of assembly, homohexamer; trimer of dimers.

The enzyme catalyses (8S)-3',8-cyclo-7,8-dihydroguanosine 5'-triphosphate = cyclic pyranopterin phosphate + diphosphate. Its pathway is cofactor biosynthesis; molybdopterin biosynthesis. In terms of biological role, catalyzes the conversion of (8S)-3',8-cyclo-7,8-dihydroguanosine 5'-triphosphate to cyclic pyranopterin monophosphate (cPMP). The polypeptide is Cyclic pyranopterin monophosphate synthase (Escherichia coli O9:H4 (strain HS)).